A 271-amino-acid polypeptide reads, in one-letter code: Phosphate import ATP-binding protein PstB 1 (271 aa).

The 242-residue stretch at 25-266 (LTVEHLNLYY…PTQRRTEDYI (242 aa)) folds into the ABC transporter domain. 57–64 (GPSGCGKS) is a binding site for ATP.

It belongs to the ABC transporter superfamily. Phosphate importer (TC 3.A.1.7) family. In terms of assembly, the complex is composed of two ATP-binding proteins (PstB), two transmembrane proteins (PstC and PstA) and a solute-binding protein (PstS).

It localises to the cell inner membrane. The enzyme catalyses phosphate(out) + ATP + H2O = ADP + 2 phosphate(in) + H(+). In terms of biological role, part of the ABC transporter complex PstSACB involved in phosphate import. Responsible for energy coupling to the transport system. This Pectobacterium atrosepticum (strain SCRI 1043 / ATCC BAA-672) (Erwinia carotovora subsp. atroseptica) protein is Phosphate import ATP-binding protein PstB 1.